Consider the following 389-residue polypeptide: 26S proteasome non-ATPase regulatory subunit 6 (389 aa).

Positions 193 to 361 (DFKQAAELFL…EVVETNRPDS (169 aa)) constitute a PCI domain.

It belongs to the proteasome subunit S10 family. In terms of assembly, component of the 19S proteasome regulatory particle complex. The 26S proteasome consists of a 20S core particle (CP) and two 19S regulatory subunits (RP). The regulatory particle is made of a lid composed of 9 subunits including PSMD6, a base containing 6 ATPases and few additional components.

Functionally, component of the 26S proteasome, a multiprotein complex involved in the ATP-dependent degradation of ubiquitinated proteins. This complex plays a key role in the maintenance of protein homeostasis by removing misfolded or damaged proteins, which could impair cellular functions, and by removing proteins whose functions are no longer required. Therefore, the proteasome participates in numerous cellular processes, including cell cycle progression, apoptosis, or DNA damage repair. The polypeptide is 26S proteasome non-ATPase regulatory subunit 6 (PSMD6) (Bos taurus (Bovine)).